The chain runs to 273 residues: 1,4-dihydroxy-2-naphthoyl-CoA synthase (273 aa).

Substrate contacts are provided by residues Arg34, 73–77 (SGGDQ), Tyr85, 117–121 (YAVGG), Thr143, Ser149, Tyr246, and Lys261. 142 to 144 (QTG) provides a ligand contact to hydrogencarbonate. Residues 254–265 (GRDAFKEKRDPD) are compositionally biased toward basic and acidic residues. Residues 254–273 (GRDAFKEKRDPDFDQFPKFP) are disordered.

Belongs to the enoyl-CoA hydratase/isomerase family. MenB subfamily. It depends on hydrogencarbonate as a cofactor.

The enzyme catalyses 2-succinylbenzoyl-CoA + H(+) = 1,4-dihydroxy-2-naphthoyl-CoA + H2O. The protein operates within quinol/quinone metabolism; 1,4-dihydroxy-2-naphthoate biosynthesis; 1,4-dihydroxy-2-naphthoate from chorismate: step 6/7. It functions in the pathway quinol/quinone metabolism; menaquinone biosynthesis. Functionally, converts o-succinylbenzoyl-CoA (OSB-CoA) to 1,4-dihydroxy-2-naphthoyl-CoA (DHNA-CoA). This is 1,4-dihydroxy-2-naphthoyl-CoA synthase from Staphylococcus aureus (strain MSSA476).